Consider the following 245-residue polypeptide: Carboxy-S-adenosyl-L-methionine synthase (245 aa).

S-adenosyl-L-methionine contacts are provided by residues tyrosine 42, 67–69 (GCS), 92–93 (DN), 120–121 (DI), asparagine 135, and arginine 202.

The protein belongs to the class I-like SAM-binding methyltransferase superfamily. Cx-SAM synthase family. In terms of assembly, homodimer.

It carries out the reaction prephenate + S-adenosyl-L-methionine = carboxy-S-adenosyl-L-methionine + 3-phenylpyruvate + H2O. In terms of biological role, catalyzes the conversion of S-adenosyl-L-methionine (SAM) to carboxy-S-adenosyl-L-methionine (Cx-SAM). This is Carboxy-S-adenosyl-L-methionine synthase from Vibrio parahaemolyticus serotype O3:K6 (strain RIMD 2210633).